A 952-amino-acid polypeptide reads, in one-letter code: MTDETAHPTQSASKQESAALKQTGDDQQESQQQRGYTNYNNGSNYTQKKPYNSNRPHQQRGGKFGPNRYNNRGNYNGGGSFRGGHMGANSSNVPWTGYYNNYPVYYQPQQMAAAGSAPANPIPVEEKSPVPTKIEITTKSGEHLDLKEQHKAKLQSQERSTVSPQPESKLKETSDSTSTSTPTPTPSTNDSKASSEENISEAEKTRRNFIEQVKLRKAALEKKRKEQLEGSSGNNNIPMKTTPENVEEKGSDKPEVTEKTKPAEEKSAEPEVKQETPAEEGEQGEKGQIKEESTPKVLTFAERLKLKKQQKEREEKTEGKENKEVPVQEETKSAIESAPVPPSEQVKEETEVAETEQSNIDESATTPAIPTKSDEAEAEVEAEAGDAGTKIGLEAEIETTTDETDDGTNTVSHILNVLKDATPIEDVFSFNYPEGIEGPDIKYKKEHVKYTYGPTFLLQFKDKLNVKADAEWVQSTASKIVIPPGMGRGNRSRDSGRFGNNSSRGHDFRNTSVRNMDDRANSRTSSKRRSKRMNDDRRSNRSYTSRRDRERGSYRNEEKREDDKPKEEVAPLVPSANRWVPKFKSKKTEKKLAPDGKTELLDKDEVERKMKSLLNKLTLEMFDAISSEILAIANISVWETNGETLKAVIEQIFLKACDEPHWSSMYAQLCGKVVKELNPDITDETNEGKTGPKLVLHYLVARCHAEFDKGWTDKLPTNEDGTPLEPEMMSEEYYAAASAKRRGLGLVRFIGFLYRLNLLTGKMMFECFRRLMKDLTDSPSEETLESVVELLNTVGEQFETDSFRTGQATLEGSQLLDSLFGILDNIIQTAKISSRIKFKLIDIKELRHDKNWNSDKKDNGPKTIQQIHEEEERQRQLKNNSRSNSRRTNNSSNRHSFRRDAPPASKDSFITTRTYSQRNSQRAPPPKEEPAAPTSTATNMFSALMGESDDEE.

Disordered stretches follow at residues methionine 1–glycine 77, glycine 115–threonine 389, and valine 481–serine 575. Polar residues predominate over residues histidine 7–glutamate 16. The segment covering glutamate 29–threonine 46 has biased composition (low complexity). Residues glutamine 47 to proline 56 are compositionally biased toward polar residues. Over residues glycine 65–asparagine 74 the composition is skewed to low complexity. The segment covering serine 140–lysine 151 has biased composition (basic and acidic residues). A compositionally biased stretch (polar residues) spans leucine 154–proline 166. Serine 163 carries the post-translational modification Phosphoserine. Low complexity predominate over residues aspartate 175–serine 191. At threonine 181 the chain carries Phosphothreonine. Positions threonine 188 to threonine 299 are interaction with PAB1. Serine 195 carries the phosphoserine modification. Over residues alanine 218–leucine 228 the composition is skewed to basic and acidic residues. Residues glutamate 229–glutamate 244 are compositionally biased toward polar residues. Composition is skewed to basic and acidic residues over residues valine 246 to threonine 276, glutamine 283 to threonine 294, and glutamine 309 to serine 333. Residues threonine 355–alanine 368 are compositionally biased toward polar residues. Serine 503 bears the Phosphoserine mark. 2 stretches are compositionally biased toward basic and acidic residues: residues arginine 504–asparagine 521 and arginine 532–valine 569. Positions glutamate 607–lysine 850 constitute an MIF4G domain. The tract at residues glutamate 870 to glutamate 952 is disordered. The span at asparagine 879 to arginine 894 shows a compositional bias: low complexity. Serine 883 is subject to Phosphoserine. Threonine 888 carries the post-translational modification Phosphothreonine. 4 positions are modified to phosphoserine: serine 892, serine 896, serine 908, and serine 948. Positions serine 908–arginine 922 are enriched in polar residues.

This sequence belongs to the eukaryotic initiation factor 4G family. As to quaternary structure, component of the eIF4F complex, which composition varies with external and internal environmental conditions. It is composed of at least eIF4A (TIF1/TIF2), eIF4E (TIF45) and eIF4G (TIF4631 or TIF4632). Interacts with PAT1 in a RNA-dependent manner.

The protein localises to the cytoplasm. It is found in the P-body. The protein resides in the stress granule. Functionally, component of the eIF4F complex, which interacts with the mRNA cap structure and serves as an initial point of assembly for the translation apparatus. Stimulates translation by interaction with polyadenylate-binding protein PAB1, bringing the 5'- and 3'-ends of the mRNA in proximity. The formation of this circular mRNP structure appears to be critical for the synergistic effects of the cap and the poly(A) tail in facilitating translation initiation, recycling of ribosomes, and mRNA stability. TIF4631 is probably essential when TIF4632 is missing. The sequence is that of Eukaryotic initiation factor 4F subunit p150 from Saccharomyces cerevisiae (strain ATCC 204508 / S288c) (Baker's yeast).